The chain runs to 339 residues: MLATPTLSNFDKPSLPSSEGGDPALAARLQPLYSRFLTDLDLQPEYRRHESEKLMEEVLKFAKSTGVPHDLNSHSYQSLMVGYTYADNCLPYHDIEVKVYVAIYTWLATICDDAEALGIIDDVQLFEQRFILGEEQPTVLLRAFADQLKLTYKLYHPLVANLILCSSLNLLTSTSLVARKGIKEKGDHPSKGGNYFAWYIRERDGVGEAYSWFTFPKRQFPNLDIPIEAIEDMTRFIAYLNDVLSFYKESLAGETHNYINHTAAYEGVDSDAALHKTAQDTIDCARRIESVLAGKGEYEKAWRLHASGYLQMHVQRGRYRLIEVGVGDAPDVHEVIKKI.

The segment covering M1–S17 has biased composition (polar residues). Residues M1–G21 form a disordered region. Positions 112, 241, 245, and 249 each coordinate Mg(2+). Positions N241–E249 match the NDXXSXXXE magnesium-binding motif motif.

The protein belongs to the trichodiene synthase family. Requires Mg(2+) as cofactor. The cofactor is Mn(2+).

It catalyses the reaction (2E,6E)-farnesyl diphosphate + H2O = (-)-longiborneol + diphosphate. It participates in mycotoxin biosynthesis. Its function is as follows. Terpene cyclase involved in the biosynthesis of culmorin, a tricyclic sesquiterpene diol reported to have antifungal activity and some phytotoxicity to wheat coleoptile tissue, contributing to Fusarium head blight disease. The terpene cyclase CLM1 is responsible for the cyclization of farnesyl diphosphate into the intermediate longiborneol. Longiborneol is then hydroxylated in a regio- and endo-stereoselective manner at position C-11 by the cytochrome P450 monooxygenase CLM2 to produce culmorin. Additional non-specific oxygenases are also able to hydroxylate longiborneol at other sites than C-11 leading to 3-hydroxylongiborneol, 5-hydroxylongiborneol, 12-hydroxylongiborneol and 15-hydroxylongiborneol. Moreover, another oxygenase capable of installing a C-11 exo-hydroxy group in longiborneol can also yield 11-epi-acetylculmorin. The production of these longiborneol derivatives is dwarfed by the high abundance of culmorin, suggesting that CLM2 displays superior enzymatic activity to the unidentified, possibly promiscuous, additional oxygenases. The polypeptide is Longiborneol synthase CLM1 (Gibberella zeae (strain ATCC MYA-4620 / CBS 123657 / FGSC 9075 / NRRL 31084 / PH-1) (Wheat head blight fungus)).